We begin with the raw amino-acid sequence, 331 residues long: MAKDEKKAALEAALKKIEKNFGKGAVMRMGEKVDTQISTVPSGSLALDAALGVGGYPRGRIVEIYGPESSGKTTVALHAVAEVQKRGGTAAYIDAENAMDPAYAEALGVDIDQLILSQPNTGEEGLQIADTLISSGAIDIVVVDSVAALVPRAEIEGEMGDSHVGLQARLMSQALRKLSGTIAKTKTIAIFINQIREKVGVMFGNPETTPGGRALKFYSTIRLEVRRAEQIKQSTNVIGNRVKIKVVKNKVAPPFKVAEVDIMYGQGISQSGELLDMAADQDIVDKAGAWYSYHGEKIGQGRENAKKYLEEHPDVSEDIQTQVRKGLRNRC.

Residue 66–73 participates in ATP binding; the sequence is GPESSGKT.

Belongs to the RecA family.

It localises to the cytoplasm. In terms of biological role, can catalyze the hydrolysis of ATP in the presence of single-stranded DNA, the ATP-dependent uptake of single-stranded DNA by duplex DNA, and the ATP-dependent hybridization of homologous single-stranded DNAs. It interacts with LexA causing its activation and leading to its autocatalytic cleavage. The sequence is that of Protein RecA from Lactobacillus delbrueckii subsp. bulgaricus (strain ATCC 11842 / DSM 20081 / BCRC 10696 / JCM 1002 / NBRC 13953 / NCIMB 11778 / NCTC 12712 / WDCM 00102 / Lb 14).